A 365-amino-acid chain; its full sequence is MWPLSHRHLCLAFLLVCVLSAISFFLHLYQDSIRHGLGLSILCPDRLVTAPVAIFCLPDTPVSPNTSSPCPQHPASLSGTWTIYPDGRFGNQMGQYATLLALAQLNGRRAFILPAMHATLAPVFRITLPVLAPEVDSSTPWRELQLHDWMSEEYADLGDPFLKLSGFPCSWTFFHHLREQILSEFTLHDHLREEAQSVLRRLRLGRSGDRPRTFVGVHVRRGDYLQVMPQRWKGVVGNSAYLREAMDWFRARHEAPVFVVTSNGMEWCRENIDASKGDVMFAGDGREALPWKDFALLTQCNHTIMTIGTFGFWAAYLAGGDTVYLANFTLPDSEFLKIFKPEAAFLPEWVGINADLSPLWTLAEP.

Residues 1-8 (MWPLSHRH) lie on the Cytoplasmic side of the membrane. Residues 9–25 (LCLAFLLVCVLSAISFF) traverse the membrane as a helical; Signal-anchor for type II membrane protein segment. Topologically, residues 26–365 (LHLYQDSIRH…LSPLWTLAEP (340 aa)) are lumenal. N-linked (GlcNAc...) asparagine glycans are attached at residues Asn65, Asn301, and Asn327.

The protein belongs to the glycosyltransferase 11 family.

It localises to the golgi apparatus. The protein localises to the golgi stack membrane. The enzyme catalyses a beta-D-galactosyl-(1-&gt;4)-N-acetyl-beta-D-glucosaminyl derivative + GDP-beta-L-fucose = an alpha-L-Fuc-(1-&gt;2)-beta-D-Gal-(1-&gt;4)-beta-D-GlcNAc derivative + GDP + H(+). The catalysed reaction is a ganglioside GA1 + GDP-beta-L-fucose = a ganglioside Fuc-GA1 + GDP + H(+). It carries out the reaction a beta-D-Gal-(1-&gt;3)-beta-D-GlcNAc-(1-&gt;3)-beta-D-Gal-(1-&gt;4)-beta-D-Glc-(1&lt;-&gt;1')-Cer(d18:1(4E)) + GDP-beta-L-fucose = alpha-L-fucosyl-(1-&gt;2)- beta-D-galactosyl-(1-&gt;3)-N-acetyl-beta-D-glucosaminyl-(1-&gt;3)-beta-D-galactosyl-(1-&gt;4)-beta-D-glucosyl-(1&lt;-&gt;1')-N-acylsphing-4-enine + GDP + H(+). It catalyses the reaction a neolactoside nLc4Cer(d18:1(4E)) + GDP-beta-L-fucose = a neolactoside IV(2)-alpha-Fuc-nLc4Cer(d18:1(4E)) + GDP + H(+). The enzyme catalyses a ganglioside GM1 + GDP-beta-L-fucose = a ganglioside Fuc-GM1 + GDP + H(+). The catalysed reaction is beta-D-galactosyl-(1-&gt;3)-N-acetyl-D-galactosamine + GDP-beta-L-fucose = alpha-L-fucosyl-(1-&gt;2)-beta-D-galactosyl-(1-&gt;3)-N-acetyl-D-galactosamine + GDP + H(+). Its pathway is protein modification; protein glycosylation. In terms of biological role, catalyzes the transfer of L-fucose, from a guanosine diphosphate-beta-L-fucose, to the terminal galactose residue of glycoconjugates through an alpha(1,2) linkage leading to H antigen synthesis that is an intermediate substrate in the synthesis of ABO blood group antigens. H antigen is essential for maturation of the glomerular layer of the main olfactory bulb, in cell migration and early cell-cell contacts during tumor associated angiogenesis. Preferentially fucosylates soluble lactose and to a lesser extent fucosylates glycolipids gangliosides GA1 and GM1a. The sequence is that of Galactoside alpha-(1,2)-fucosyltransferase 1 from Leontopithecus chrysomelas (Golden-headed lion tamarin).